Reading from the N-terminus, the 459-residue chain is Glycosyl hydrolase family 109 protein (459 aa).

The tat-type signal signal peptide spans 1–45; sequence MAGDESRSNPFSRRTLLRTSAAAGAGLGVAGLSTGYGAAQPVRPA. NAD(+) contacts are provided by residues 70-71, aspartate 92, 141-144, 161-162, and asparagine 190; these read NR, WEWH, and EC. Residues tyrosine 219, arginine 238, 250 to 253, and tyrosine 332 each bind substrate; that span reads YPTH. NAD(+) is bound at residue tyrosine 250. The disordered stretch occupies residues 440–459; that stretch reads DFTRGRWQTPHPGVDSPKPA.

Belongs to the Gfo/Idh/MocA family. Glycosyl hydrolase 109 subfamily. It depends on NAD(+) as a cofactor. Predicted to be exported by the Tat system. The position of the signal peptide cleavage has not been experimentally proven.

In terms of biological role, glycosidase. The chain is Glycosyl hydrolase family 109 protein from Saccharopolyspora erythraea (strain ATCC 11635 / DSM 40517 / JCM 4748 / NBRC 13426 / NCIMB 8594 / NRRL 2338).